Reading from the N-terminus, the 830-residue chain is Outer dense fiber protein 2 (830 aa).

Phosphoserine occurs at positions 73 and 74. A Phosphothreonine modification is found at threonine 92. Serine 95 carries the post-translational modification Phosphoserine; by TSSK4. A phosphoserine mark is found at serine 106 and serine 109. Phosphothreonine is present on threonine 110. Serine 115 and serine 129 each carry phosphoserine. Lysine 138 participates in a covalent cross-link: Glycyl lysine isopeptide (Lys-Gly) (interchain with G-Cter in SUMO2). Phosphoserine is present on serine 139. A coiled-coil region spans residues glutamine 144–aspartate 217. Threonine 231 carries the phosphothreonine modification. Coiled-coil stretches lie at residues aspartate 245–leucine 423 and glutamate 461–glutamine 798. Phosphoserine occurs at positions 261 and 632. The interval lysine 537–leucine 701 is interaction with BBOF1.

It belongs to the ODF2 family. As to quaternary structure, self-associates. Associates with microtubules and forms a fibrillar structure partially linked to the microtubule network. Interacts via its C-terminus with PLK1. Interacts with ODF1. Interacts with MARK4; the interaction is required for localization of ODF2 to centrioles. Interacts with TSSK4. Interacts with AKNA. Interacts with CFAP58. Interacts with BBOF1. Interacts with CCDC38. Interacts with CCDC42. Tyrosine phosphorylated. Phosphorylated on Ser-95 by TSSK4. As to expression, testis-specific (at protein level). Expressed in spermatids at tubular stage V of the spermatogenic cycle. Highly expressed in the cytoplasm of elongating spermatids (tubular stages X/XI). In step 14/15 spermatids of tubular stage III/IV low expression detected. No expression detected in other testicular cells as well as the early round of spermatids.

It is found in the cytoplasm. It localises to the cytoskeleton. The protein localises to the microtubule organizing center. Its subcellular location is the centrosome. The protein resides in the cell projection. It is found in the cilium. It localises to the centriole. The protein localises to the spindle pole. Its subcellular location is the flagellum. Its function is as follows. Seems to be a major component of sperm tail outer dense fibers (ODF). ODFs are filamentous structures located on the outside of the axoneme in the midpiece and principal piece of the mammalian sperm tail and may help to maintain the passive elastic structures and elastic recoil of the sperm tail. May have a modulating influence on sperm motility. Functions as a general scaffold protein that is specifically localized at the distal/subdistal appendages of mother centrioles. Component of the centrosome matrix required for the localization of PLK1 and NIN to the centrosomes. Required for the formation and/or maintenance of normal CETN1 assembly. In Mus musculus (Mouse), this protein is Outer dense fiber protein 2 (Odf2).